Here is an 824-residue protein sequence, read N- to C-terminus: Type IV secretion system protein PtlC (824 aa).

ATP is bound at residue 456–463 (GQSGSGKT).

Belongs to the TrbE/VirB4 family.

Its subcellular location is the cell membrane. Its function is as follows. Component of the type IV secretion system ptl essential for secretion of assembled pertussis toxin (PTX) through the outer membrane. The polypeptide is Type IV secretion system protein PtlC (ptlC) (Bordetella pertussis (strain Tohama I / ATCC BAA-589 / NCTC 13251)).